The chain runs to 267 residues: Ribosomal RNA small subunit methyltransferase A (267 aa).

N18, L20, G45, E66, D91, and N112 together coordinate S-adenosyl-L-methionine.

Belongs to the class I-like SAM-binding methyltransferase superfamily. rRNA adenine N(6)-methyltransferase family. RsmA subfamily.

The protein resides in the cytoplasm. It carries out the reaction adenosine(1518)/adenosine(1519) in 16S rRNA + 4 S-adenosyl-L-methionine = N(6)-dimethyladenosine(1518)/N(6)-dimethyladenosine(1519) in 16S rRNA + 4 S-adenosyl-L-homocysteine + 4 H(+). Functionally, specifically dimethylates two adjacent adenosines (A1518 and A1519) in the loop of a conserved hairpin near the 3'-end of 16S rRNA in the 30S particle. May play a critical role in biogenesis of 30S subunits. This Shewanella denitrificans (strain OS217 / ATCC BAA-1090 / DSM 15013) protein is Ribosomal RNA small subunit methyltransferase A.